A 300-amino-acid polypeptide reads, in one-letter code: Protein FANTASTIC FOUR 4 (300 aa).

Polar residues predominate over residues 30-56 (PQLSTPLKSHFQNSSIAPQDNPITINA). Disordered stretches follow at residues 30-104 (PQLS…SPSS), 142-170 (TMET…LPPP), and 227-264 (TETK…KEEE). 2 stretches are compositionally biased toward low complexity: residues 58–88 (SLPS…NSSS) and 142–151 (TMETRTTSTT). The FAF domain occupies 166-217 (SLPPPLTSMIGFDCIEVKSHRENGRLVMMATRPPPRNRCLQDRSNGCVRLAI). A compositionally biased stretch (acidic residues) spans 233 to 262 (KEEEEEETIETVRDNEEEIPEYKEEEEEKE).

The protein belongs to the fantastic four family. In terms of tissue distribution, expressed in the shoot apex and young siliques. Detected in provascular and vascular tissue, but not in the vegetative meristem. In inflorescences, restricted to the base of the flower and to the vasculature of the stem and the pedicels, but absent from young flowers. Detected in the center of the inflorescence meristem.

Functionally, regulates the size of the shoot meristem by modulating the CLV3-WUS feedback loop. Can repress WUS but is under negative control by CLV3. The protein is Protein FANTASTIC FOUR 4 (FAF4) of Arabidopsis thaliana (Mouse-ear cress).